The following is a 358-amino-acid chain: Phospho-N-acetylmuramoyl-pentapeptide-transferase (358 aa).

Helical transmembrane passes span 24–44, 73–93, 95–115, 134–154, 169–189, 197–217, 233–253, 261–281, 286–306, and 335–355; these read FRSI…GPWV, TMGG…WADL, NVFI…GFVD, MFWQ…LPGF, ELGI…SNAV, GLAI…CYIA, GAGE…GFLW, VFMG…LAVL, ILLV…IFQV, and KIIV…ISTL.

This sequence belongs to the glycosyltransferase 4 family. MraY subfamily. It depends on Mg(2+) as a cofactor.

The protein localises to the cell inner membrane. The catalysed reaction is UDP-N-acetyl-alpha-D-muramoyl-L-alanyl-gamma-D-glutamyl-meso-2,6-diaminopimeloyl-D-alanyl-D-alanine + di-trans,octa-cis-undecaprenyl phosphate = di-trans,octa-cis-undecaprenyl diphospho-N-acetyl-alpha-D-muramoyl-L-alanyl-D-glutamyl-meso-2,6-diaminopimeloyl-D-alanyl-D-alanine + UMP. Its pathway is cell wall biogenesis; peptidoglycan biosynthesis. Its function is as follows. Catalyzes the initial step of the lipid cycle reactions in the biosynthesis of the cell wall peptidoglycan: transfers peptidoglycan precursor phospho-MurNAc-pentapeptide from UDP-MurNAc-pentapeptide onto the lipid carrier undecaprenyl phosphate, yielding undecaprenyl-pyrophosphoryl-MurNAc-pentapeptide, known as lipid I. This Geobacter sp. (strain M21) protein is Phospho-N-acetylmuramoyl-pentapeptide-transferase.